A 188-amino-acid polypeptide reads, in one-letter code: dCTP deaminase (188 aa).

DCTP-binding positions include 111-116, 135-137, Q156, Y170, and Q180; these read KSTYAR and TLE. Residue E137 is the Proton donor/acceptor of the active site.

It belongs to the dCTP deaminase family. As to quaternary structure, homotrimer.

It carries out the reaction dCTP + H2O + H(+) = dUTP + NH4(+). It functions in the pathway pyrimidine metabolism; dUMP biosynthesis; dUMP from dCTP (dUTP route): step 1/2. Its function is as follows. Catalyzes the deamination of dCTP to dUTP. In Coxiella burnetii (strain CbuK_Q154) (Coxiella burnetii (strain Q154)), this protein is dCTP deaminase.